We begin with the raw amino-acid sequence, 548 residues long: Rhotekin (548 aa).

Residues 10–85 enclose the REM-1 domain; that stretch reads DLNMLYIRQM…LQRRKEAQVL (76 aa). Phosphoserine occurs at positions 22 and 93. A disordered region spans residues 83–103; it reads QVLGKTGRRPSDSVQPPERSP. At arginine 217 the chain carries Asymmetric dimethylarginine. Serine 219 is subject to Phosphoserine. The 108-residue stretch at 296–403 folds into the PH domain; it reads QPTASGTLRV…WMEALWQLFL (108 aa). A phosphoserine mark is found at serine 504, serine 513, and serine 528. The disordered stretch occupies residues 506–548; it reads DAVPADHSLGPSRSVAPLPPQRSPQSRGFYSKSQLSTWLQSPV. The segment covering 528-548 has biased composition (polar residues); it reads SPQSRGFYSKSQLSTWLQSPV.

Interacts via its C-terminal region with the TAX1BP3 PDZ domain. This interaction facilitates Rho-mediated activation of the c-Fos serum response element (SRE). Interacts with SEPT9. Specifically binds to GTP-bound RHOA, RHOB and RHOC and inhibits their GTPase activity.

Its function is as follows. Mediates Rho signaling to activate NF-kappa-B and may confer increased resistance to apoptosis to cells in gastric tumorigenesis. May play a novel role in the organization of septin structures. The chain is Rhotekin from Rattus norvegicus (Rat).